We begin with the raw amino-acid sequence, 140 residues long: Small ribosomal subunit protein uS19 (140 aa).

Residues 55–74 (LAEARESGTEETANNPIRTH) are disordered.

The protein belongs to the universal ribosomal protein uS19 family.

Protein S19 forms a complex with S13 that binds strongly to the 16S ribosomal RNA. In Halobacterium salinarum (strain ATCC 29341 / DSM 671 / R1), this protein is Small ribosomal subunit protein uS19.